The chain runs to 98 residues: Growth-regulated protein homolog gamma (98 aa).

The first 29 residues, 1–29 (MAPAASSAPRLLRAAMLLLLLVAAGRRAA), serve as a signal peptide directing secretion. 2 disulfide bridges follow: C39/C65 and C41/C81.

This sequence belongs to the intercrine alpha (chemokine CxC) family.

Its subcellular location is the secreted. The chain is Growth-regulated protein homolog gamma from Bos taurus (Bovine).